The sequence spans 282 residues: tRNA (guanine-N(7)-)-methyltransferase (282 aa).

Residues methionine 1–aspartate 31 form a disordered region. A compositionally biased stretch (basic and acidic residues) spans alanine 16–aspartate 31. S-adenosyl-L-methionine-binding positions include glycine 99, glutamate 122 to isoleucine 123, asparagine 157 to alanine 158, and cysteine 177. Aspartate 180 is an active-site residue. Threonine 255–glutamate 257 lines the S-adenosyl-L-methionine pocket.

The protein belongs to the class I-like SAM-binding methyltransferase superfamily. TrmB family. Forms a complex with TRM82.

It localises to the nucleus. The catalysed reaction is guanosine(46) in tRNA + S-adenosyl-L-methionine = N(7)-methylguanosine(46) in tRNA + S-adenosyl-L-homocysteine. The protein operates within tRNA modification; N(7)-methylguanine-tRNA biosynthesis. Functionally, catalyzes the formation of N(7)-methylguanine at position 46 (m7G46) in tRNA. This is tRNA (guanine-N(7)-)-methyltransferase from Eremothecium gossypii (strain ATCC 10895 / CBS 109.51 / FGSC 9923 / NRRL Y-1056) (Yeast).